A 153-amino-acid polypeptide reads, in one-letter code: UPF0756 membrane protein LSEI_1366 (153 aa).

4 helical membrane-spanning segments follow: residues 4 to 24 (WLFL…SLII), 52 to 72 (WGVT…EIGF), 85 to 105 (WIAI…VGLL), and 115 to 135 (LVFG…GPVI).

The protein belongs to the UPF0756 family.

Its subcellular location is the cell membrane. The protein is UPF0756 membrane protein LSEI_1366 of Lacticaseibacillus paracasei (strain ATCC 334 / BCRC 17002 / CCUG 31169 / CIP 107868 / KCTC 3260 / NRRL B-441) (Lactobacillus paracasei).